A 270-amino-acid chain; its full sequence is Interleukin-1 beta (270 aa).

The propeptide occupies 1–118 (MATVPEPTSE…VYDDDAFVCD (118 aa)).

Belongs to the IL-1 family. As to quaternary structure, monomer. In its precursor form, weakly interacts with full-length MEFV; the mature cytokine does not interact at all. Interacts with integrins ITGAV:ITGBV and ITGA5:ITGB1; integrin-binding is required for IL1B signaling. Interacts with cargo receptor TMED10; the interaction is direct and is required for the secretion of IL1B mature form. Interacts with HSP90AB1; the interaction facilitates cargo translocation into the ERGIC. Interacts with HSP90B1; the interaction facilitates cargo translocation into the ERGIC.

The protein localises to the cytoplasm. It is found in the cytosol. The protein resides in the secreted. It localises to the lysosome. Its subcellular location is the extracellular exosome. In terms of biological role, potent pro-inflammatory cytokine. Initially discovered as the major endogenous pyrogen, induces prostaglandin synthesis, neutrophil influx and activation, T-cell activation and cytokine production, B-cell activation and antibody production, and fibroblast proliferation and collagen production. Promotes Th17 differentiation of T-cells. Synergizes with IL12/interleukin-12 to induce IFNG synthesis from T-helper 1 (Th1) cells. Plays a role in angiogenesis by inducing VEGF production synergistically with TNF and IL6. Involved in transduction of inflammation downstream of pyroptosis: its mature form is specifically released in the extracellular milieu by passing through the gasdermin-D (GSDMD) pore. The chain is Interleukin-1 beta (IL1B) from Phoca vitulina richardii (Pacific harbor seal).